Consider the following 215-residue polypeptide: ER lumen protein-retaining receptor A (215 aa).

At 1 to 2 (MN) the chain is on the lumenal side. The chain crosses the membrane as a helical span at residues 3 to 21 (IFRFAGDMSHLISVLILLL). Over 22–35 (KIYATKSCAGISLK) the chain is Cytoplasmic. Residues 36 to 53 (TQELYALVFLTRYLDLFT) traverse the membrane as a helical segment. Residues 54–61 (DYVSLYNS) are Lumenal-facing. A helical membrane pass occupies residues 62 to 82 (IMKIVFIASSLAIVWCMRRHP). Topologically, residues 83 to 98 (LVRRSYDKDLDTFRHQ) are cytoplasmic. Residues 99 to 112 (YVVLACFVLGLILN) traverse the membrane as a helical segment. The Lumenal segment spans residues 113–119 (EKFTVQE). The helical transmembrane segment at 120 to 139 (VFWAFSIYLEAVAILPQLVL) threads the bilayer. Over 140 to 151 (LQRSGNVDNLTG) the chain is Cytoplasmic. The chain crosses the membrane as a helical span at residues 152–170 (QYVVFLGAYRGLYIINWIY). Topologically, residues 171-181 (RYFTEDHFTRW) are lumenal. Residues 182 to 202 (IACVSGLVQTALYADFFYYYY) form a helical membrane-spanning segment. The Cytoplasmic segment spans residues 203–215 (ISWKTNTKLKLPA).

This sequence belongs to the ERD2 family.

The protein localises to the endoplasmic reticulum membrane. Required for the retention of luminal endoplasmic reticulum proteins. Determines the specificity of the luminal ER protein retention system. Also required for normal vesicular traffic through the Golgi. This receptor recognizes H-D-E-L. The chain is ER lumen protein-retaining receptor A (ERD2A) from Arabidopsis thaliana (Mouse-ear cress).